A 211-amino-acid polypeptide reads, in one-letter code: Large ribosomal subunit protein uL4 (211 aa).

A disordered region spans residues 44–90 (ERQGTHSTLTKGEVRGGGKKPWRQKHTGKARTGSTRNPHWTGGGVVF). Residues 60 to 72 (GGKKPWRQKHTGK) show a composition bias toward basic residues.

The protein belongs to the universal ribosomal protein uL4 family. Part of the 50S ribosomal subunit.

Functionally, one of the primary rRNA binding proteins, this protein initially binds near the 5'-end of the 23S rRNA. It is important during the early stages of 50S assembly. It makes multiple contacts with different domains of the 23S rRNA in the assembled 50S subunit and ribosome. In terms of biological role, forms part of the polypeptide exit tunnel. This Ureaplasma urealyticum serovar 10 (strain ATCC 33699 / Western) protein is Large ribosomal subunit protein uL4.